We begin with the raw amino-acid sequence, 190 residues long: Ferric nitrobindin-like protein (190 aa).

Residues 20–26 carry the GXWXGXG motif; the sequence is GNWAGAG.

It belongs to the nitrobindin family.

This chain is Ferric nitrobindin-like protein, found in Streptomyces griseus subsp. griseus (strain JCM 4626 / CBS 651.72 / NBRC 13350 / KCC S-0626 / ISP 5235).